The chain runs to 434 residues: Glutamyl-tRNA reductase (434 aa).

Substrate-binding positions include 49–52 (TCNR), Ser-109, 114–116 (EPQ), and Gln-120. Cys-50 functions as the Nucleophile in the catalytic mechanism. 189–194 (GAGEMC) serves as a coordination point for NADP(+).

It belongs to the glutamyl-tRNA reductase family. In terms of assembly, homodimer.

The catalysed reaction is (S)-4-amino-5-oxopentanoate + tRNA(Glu) + NADP(+) = L-glutamyl-tRNA(Glu) + NADPH + H(+). Its pathway is porphyrin-containing compound metabolism; protoporphyrin-IX biosynthesis; 5-aminolevulinate from L-glutamyl-tRNA(Glu): step 1/2. In terms of biological role, catalyzes the NADPH-dependent reduction of glutamyl-tRNA(Glu) to glutamate 1-semialdehyde (GSA). This chain is Glutamyl-tRNA reductase, found in Geobacter metallireducens (strain ATCC 53774 / DSM 7210 / GS-15).